We begin with the raw amino-acid sequence, 1241 residues long: ATP-dependent helicase/nuclease subunit A (1241 aa).

The UvrD-like helicase ATP-binding domain occupies 12–485 (SQWTDDQWKA…IDLAKNFRSR (474 aa)). ATP is bound at residue 33 to 40 (AAAGSGKT). The region spanning 505–805 (GEIDYDADAE…RIMTIHKSKG (301 aa)) is the UvrD-like helicase C-terminal domain.

Belongs to the helicase family. AddA subfamily. In terms of assembly, heterodimer of AddA and AddB/RexB. Mg(2+) is required as a cofactor.

The enzyme catalyses Couples ATP hydrolysis with the unwinding of duplex DNA by translocating in the 3'-5' direction.. It catalyses the reaction ATP + H2O = ADP + phosphate + H(+). The heterodimer acts as both an ATP-dependent DNA helicase and an ATP-dependent, dual-direction single-stranded exonuclease. Recognizes the chi site generating a DNA molecule suitable for the initiation of homologous recombination. The AddA nuclease domain is required for chi fragment generation; this subunit has the helicase and 3' -&gt; 5' nuclease activities. This chain is ATP-dependent helicase/nuclease subunit A, found in Bacillus thuringiensis (strain Al Hakam).